A 201-amino-acid polypeptide reads, in one-letter code: Alanine--tRNA ligase (201 aa).

This sequence belongs to the class-II aminoacyl-tRNA synthetase family. Zn(2+) serves as cofactor.

It is found in the cytoplasm. It carries out the reaction tRNA(Ala) + L-alanine + ATP = L-alanyl-tRNA(Ala) + AMP + diphosphate. Its function is as follows. Catalyzes the attachment of alanine to tRNA(Ala) in a two-step reaction: alanine is first activated by ATP to form Ala-AMP and then transferred to the acceptor end of tRNA(Ala). Also edits incorrectly charged Ser-tRNA(Ala) and Gly-tRNA(Ala) via its editing domain. In Rhizobium leguminosarum bv. viciae, this protein is Alanine--tRNA ligase (alaS).